The primary structure comprises 558 residues: Membrane protein insertase YidC (558 aa).

5 helical membrane passes run I3 to W23, F364 to F384, L438 to V458, P477 to P497, and M508 to L528.

This sequence belongs to the OXA1/ALB3/YidC family. Type 1 subfamily. As to quaternary structure, interacts with the Sec translocase complex via SecD. Specifically interacts with transmembrane segments of nascent integral membrane proteins during membrane integration.

It is found in the cell inner membrane. Required for the insertion and/or proper folding and/or complex formation of integral membrane proteins into the membrane. Involved in integration of membrane proteins that insert both dependently and independently of the Sec translocase complex, as well as at least some lipoproteins. Aids folding of multispanning membrane proteins. This chain is Membrane protein insertase YidC, found in Burkholderia mallei (strain NCTC 10247).